A 160-amino-acid polypeptide reads, in one-letter code: Small ribosomal subunit protein uS7 (160 aa).

Belongs to the universal ribosomal protein uS7 family. Part of the 30S ribosomal subunit. Contacts proteins S9 and S11.

Functionally, one of the primary rRNA binding proteins, it binds directly to 16S rRNA where it nucleates assembly of the head domain of the 30S subunit. Is located at the subunit interface close to the decoding center, probably blocks exit of the E-site tRNA. The sequence is that of Small ribosomal subunit protein uS7 from Ehrlichia ruminantium (strain Gardel).